Reading from the N-terminus, the 266-residue chain is MKRINALTIAGTDPSGGAGIQADLKTFSALGAYGCSVITALVAQNTRGVQSVYRIEPDFVAAQLDSVFSDVRIDTTKIGMLAETDIVEAVAERLQRYQIQNVVLDTVMLAKSGDPLLSPSAVATLRSRLLPQVSLITPNLPEAAALLDAPHARTEQEMLEQGRSLLAMGCGAVLMKGGHLDDEQSPDWLFTREGEQRFTAPRIMTKNTHGTGCTLSAALAALRPRHTNWADTVQEAKSWLSSALAQADTLEVGHGIGPVHHFHAWW.

Gln-44 lines the 4-amino-5-hydroxymethyl-2-methylpyrimidine pocket.

It belongs to the ThiD family. As to quaternary structure, monomer.

It catalyses the reaction 4-amino-5-hydroxymethyl-2-methylpyrimidine + ATP = 4-amino-2-methyl-5-(phosphooxymethyl)pyrimidine + ADP + H(+). The enzyme catalyses 4-amino-2-methyl-5-(phosphooxymethyl)pyrimidine + ATP = 4-amino-2-methyl-5-(diphosphooxymethyl)pyrimidine + ADP. It participates in cofactor biosynthesis; thiamine diphosphate biosynthesis; 4-amino-2-methyl-5-diphosphomethylpyrimidine from 5-amino-1-(5-phospho-D-ribosyl)imidazole: step 2/3. It functions in the pathway cofactor biosynthesis; thiamine diphosphate biosynthesis; 4-amino-2-methyl-5-diphosphomethylpyrimidine from 5-amino-1-(5-phospho-D-ribosyl)imidazole: step 3/3. Functionally, catalyzes the phosphorylation of hydroxymethylpyrimidine phosphate (HMP-P) to HMP-PP, and of HMP to HMP-P. Shows no activity with pyridoxal, pyridoxamine or pyridoxine. The sequence is that of Hydroxymethylpyrimidine/phosphomethylpyrimidine kinase (thiD) from Escherichia coli (strain K12).